Here is a 132-residue protein sequence, read N- to C-terminus: Small ribosomal subunit protein uS11 (132 aa).

The protein belongs to the universal ribosomal protein uS11 family. In terms of assembly, part of the 30S ribosomal subunit. Interacts with proteins S7 and S18. Binds to IF-3.

Functionally, located on the platform of the 30S subunit, it bridges several disparate RNA helices of the 16S rRNA. Forms part of the Shine-Dalgarno cleft in the 70S ribosome. The sequence is that of Small ribosomal subunit protein uS11 from Cyanothece sp. (strain PCC 7425 / ATCC 29141).